Reading from the N-terminus, the 249-residue chain is Pleckstrin homology domain-containing family F member 2 (249 aa).

Ser-16 is modified (phosphoserine). Residues Val-35–Thr-131 enclose the PH domain. N6-acetyllysine is present on Lys-44. The FYVE-type zinc finger occupies Asp-152 to Ser-212. Cys-158, Cys-161, Cys-175, Cys-178, Cys-183, Cys-186, Cys-204, and Cys-207 together coordinate Zn(2+). The segment covering Pro-221 to Ser-233 has biased composition (polar residues). A disordered region spans residues Pro-221–Asp-249. Positions Ala-238–Asp-249 are enriched in acidic residues. Residues Ser-239 and Ser-248 each carry the phosphoserine modification.

In terms of assembly, may interact with EEA1. Expressed in brain, stomach and thymus, as well as in kidney, spleen, and skeletal muscle. Also expressed in peripheral blood mononuclear cells and dendritic cells.

The protein localises to the early endosome membrane. It is found in the endoplasmic reticulum. Functionally, may play a role in early endosome fusion upstream of RAB5, hence regulating receptor trafficking and fluid-phase transport. Enhances cellular sensitivity to TNF-induced apoptosis. The protein is Pleckstrin homology domain-containing family F member 2 (Plekhf2) of Mus musculus (Mouse).